A 671-amino-acid polypeptide reads, in one-letter code: Probable ATP-dependent RNA helicase ddx41 (671 aa).

Coiled coils occupy residues 19 to 43 (IPLK…QPQQ) and 100 to 154 (LDQK…DMEE). Composition is skewed to low complexity over residues 33–83 (LNNL…NNDN) and 125–139 (IEND…NNNG). Disordered stretches follow at residues 33–88 (LNNL…FEDE) and 125–148 (IEND…KEEK). A Q motif motif is present at residues 222–250 (TTFKEMKIPKPVIDVLLEKGIKKPSPIQV). The Helicase ATP-binding domain occupies 253–438 (LPVILSGRDM…RSALVLPVEV (186 aa)). ATP is bound at residue 266–273 (AYTGSGKT). The short motif at 386-389 (DEAD) is the DEAD box element. One can recognise a Helicase C-terminal domain in the interval 449 to 609 (NVTQEVEFVK…KVPPALLEIP (161 aa)). The tract at residues 617 to 636 (KLQDRNGNTGGGADDDDTKP) is disordered. The CCHC-type zinc-finger motif lies at 635 to 652 (KPCEYCDGRGHRLVNCPK).

Belongs to the DEAD box helicase family. DDX41 subfamily.

Its subcellular location is the nucleus. It carries out the reaction ATP + H2O = ADP + phosphate + H(+). The polypeptide is Probable ATP-dependent RNA helicase ddx41 (ddx41) (Dictyostelium discoideum (Social amoeba)).